The sequence spans 384 residues: S-adenosylmethionine synthase (384 aa).

Residue H16 participates in ATP binding. D18 contributes to the Mg(2+) binding site. E44 is a K(+) binding site. 2 residues coordinate L-methionine: E57 and Q100. Positions 100–110 are flexible loop; that stretch reads QSADIAMGVDE. Residues 165–167, D240, 246–247, A263, and K267 each bind ATP; these read DAK and RK. D240 is a binding site for L-methionine. L-methionine is bound at residue K271.

It belongs to the AdoMet synthase family. As to quaternary structure, homotetramer; dimer of dimers. Mg(2+) serves as cofactor. The cofactor is K(+).

The protein localises to the cytoplasm. It catalyses the reaction L-methionine + ATP + H2O = S-adenosyl-L-methionine + phosphate + diphosphate. Its pathway is amino-acid biosynthesis; S-adenosyl-L-methionine biosynthesis; S-adenosyl-L-methionine from L-methionine: step 1/1. In terms of biological role, catalyzes the formation of S-adenosylmethionine (AdoMet) from methionine and ATP. The overall synthetic reaction is composed of two sequential steps, AdoMet formation and the subsequent tripolyphosphate hydrolysis which occurs prior to release of AdoMet from the enzyme. The sequence is that of S-adenosylmethionine synthase from Teredinibacter turnerae (strain ATCC 39867 / T7901).